The following is a 435-amino-acid chain: Elongation factor 1-alpha (435 aa).

The region spanning 4–229 is the tr-type G domain; that stretch reads KPHLNLIVIG…DQLEIPPKPV (226 aa). A G1 region spans residues 13–20; the sequence is GHVDHGKS. Residue 13-20 participates in GTP binding; sequence GHVDHGKS. A Mg(2+)-binding site is contributed by Ser-20. The segment at 69–73 is G2; the sequence is GVTIN. The tract at residues 90–93 is G3; the sequence is DAPG. GTP-binding positions include 90 to 94 and 152 to 155; these read DAPGH and NKMD. Positions 152–155 are G4; it reads NKMD. Residues 193–195 are G5; sequence VAP.

It belongs to the TRAFAC class translation factor GTPase superfamily. Classic translation factor GTPase family. EF-Tu/EF-1A subfamily.

The protein localises to the cytoplasm. The catalysed reaction is GTP + H2O = GDP + phosphate + H(+). In terms of biological role, GTP hydrolase that promotes the GTP-dependent binding of aminoacyl-tRNA to the A-site of ribosomes during protein biosynthesis. This is Elongation factor 1-alpha from Sulfurisphaera tokodaii (strain DSM 16993 / JCM 10545 / NBRC 100140 / 7) (Sulfolobus tokodaii).